Here is an 87-residue protein sequence, read N- to C-terminus: DNA/RNA-binding protein Alba (87 aa).

Lys-9 carries the post-translational modification N6-acetyllysine.

Belongs to the histone-like Alba family. Post-translationally, acetylated. Acetylation at Lys-9 decreases DNA-binding affinity.

The protein localises to the cytoplasm. It localises to the chromosome. Binds double-stranded DNA tightly but without sequence specificity. Involved in DNA compaction. The protein is DNA/RNA-binding protein Alba of Methanocaldococcus jannaschii (strain ATCC 43067 / DSM 2661 / JAL-1 / JCM 10045 / NBRC 100440) (Methanococcus jannaschii).